A 389-amino-acid chain; its full sequence is Succinate--CoA ligase [ADP-forming] subunit beta (389 aa).

Residues 9-244 form the ATP-grasp domain; sequence KEILRKYNVP…LDEEDANEIE (236 aa). ATP contacts are provided by residues lysine 46, 53-55, glutamate 99, alanine 102, and glutamate 107; that span reads GRG. Positions 199 and 213 each coordinate Mg(2+). Residues asparagine 264 and 321 to 323 contribute to the substrate site; that span reads GIM.

Belongs to the succinate/malate CoA ligase beta subunit family. In terms of assembly, heterotetramer of two alpha and two beta subunits. Mg(2+) is required as a cofactor.

It carries out the reaction succinate + ATP + CoA = succinyl-CoA + ADP + phosphate. The enzyme catalyses GTP + succinate + CoA = succinyl-CoA + GDP + phosphate. The protein operates within carbohydrate metabolism; tricarboxylic acid cycle; succinate from succinyl-CoA (ligase route): step 1/1. Its function is as follows. Succinyl-CoA synthetase functions in the citric acid cycle (TCA), coupling the hydrolysis of succinyl-CoA to the synthesis of either ATP or GTP and thus represents the only step of substrate-level phosphorylation in the TCA. The beta subunit provides nucleotide specificity of the enzyme and binds the substrate succinate, while the binding sites for coenzyme A and phosphate are found in the alpha subunit. In Cupriavidus pinatubonensis (strain JMP 134 / LMG 1197) (Cupriavidus necator (strain JMP 134)), this protein is Succinate--CoA ligase [ADP-forming] subunit beta.